We begin with the raw amino-acid sequence, 227 residues long: Cytochrome c oxidase subunit 2 (227 aa).

Residues 1–14 are Mitochondrial intermembrane-facing; that stretch reads MAYPFELGFQDATS. A helical transmembrane segment spans residues 15 to 45; that stretch reads PIMEELLHFHDHTLMIVFLISSLVLYIISLM. Residues 46 to 59 are Mitochondrial matrix-facing; it reads LTTKLTHTSTMDAQ. The chain crosses the membrane as a helical span at residues 60–87; the sequence is EVETIWTILPAIILILIALPSLRILYMM. The Mitochondrial intermembrane portion of the chain corresponds to 88–227; the sequence is DEINDPSLTV…HFENWSSSML (140 aa). Cu cation is bound by residues histidine 161, cysteine 196, glutamate 198, cysteine 200, histidine 204, and methionine 207. Residue glutamate 198 coordinates Mg(2+).

The protein belongs to the cytochrome c oxidase subunit 2 family. Component of the cytochrome c oxidase (complex IV, CIV), a multisubunit enzyme composed of 14 subunits. The complex is composed of a catalytic core of 3 subunits MT-CO1, MT-CO2 and MT-CO3, encoded in the mitochondrial DNA, and 11 supernumerary subunits COX4I, COX5A, COX5B, COX6A, COX6B, COX6C, COX7A, COX7B, COX7C, COX8 and NDUFA4, which are encoded in the nuclear genome. The complex exists as a monomer or a dimer and forms supercomplexes (SCs) in the inner mitochondrial membrane with NADH-ubiquinone oxidoreductase (complex I, CI) and ubiquinol-cytochrome c oxidoreductase (cytochrome b-c1 complex, complex III, CIII), resulting in different assemblies (supercomplex SCI(1)III(2)IV(1) and megacomplex MCI(2)III(2)IV(2)). Found in a complex with TMEM177, COA6, COX18, COX20, SCO1 and SCO2. Interacts with TMEM177 in a COX20-dependent manner. Interacts with COX20. Interacts with COX16. Requires Cu cation as cofactor.

The protein resides in the mitochondrion inner membrane. It catalyses the reaction 4 Fe(II)-[cytochrome c] + O2 + 8 H(+)(in) = 4 Fe(III)-[cytochrome c] + 2 H2O + 4 H(+)(out). In terms of biological role, component of the cytochrome c oxidase, the last enzyme in the mitochondrial electron transport chain which drives oxidative phosphorylation. The respiratory chain contains 3 multisubunit complexes succinate dehydrogenase (complex II, CII), ubiquinol-cytochrome c oxidoreductase (cytochrome b-c1 complex, complex III, CIII) and cytochrome c oxidase (complex IV, CIV), that cooperate to transfer electrons derived from NADH and succinate to molecular oxygen, creating an electrochemical gradient over the inner membrane that drives transmembrane transport and the ATP synthase. Cytochrome c oxidase is the component of the respiratory chain that catalyzes the reduction of oxygen to water. Electrons originating from reduced cytochrome c in the intermembrane space (IMS) are transferred via the dinuclear copper A center (CU(A)) of subunit 2 and heme A of subunit 1 to the active site in subunit 1, a binuclear center (BNC) formed by heme A3 and copper B (CU(B)). The BNC reduces molecular oxygen to 2 water molecules using 4 electrons from cytochrome c in the IMS and 4 protons from the mitochondrial matrix. The protein is Cytochrome c oxidase subunit 2 (MT-CO2) of Tamias merriami (Merriam's chipmunk).